The chain runs to 201 residues: Prostamide/prostaglandin F synthase (201 aa).

Belongs to the peroxiredoxin-like PRXL2 family. Prostamide/prostaglandin F synthase subfamily.

It is found in the cytoplasm. It localises to the cytosol. It catalyses the reaction prostaglandin H2 + [thioredoxin]-dithiol = prostaglandin F2alpha + [thioredoxin]-disulfide. The catalysed reaction is prostamide F2alpha + [thioredoxin]-disulfide = prostamide H2 + [thioredoxin]-dithiol. Functionally, catalyzes the reduction of prostaglandin-ethanolamide H(2) (prostamide H(2)) to prostamide F(2alpha) with NADPH as proton donor. Also able to reduce prostaglandin H(2) to prostaglandin F(2alpha). The protein is Prostamide/prostaglandin F synthase (prxl2b) of Danio rerio (Zebrafish).